The chain runs to 388 residues: FMRFamide neuropeptides (388 aa).

An N-terminal signal peptide occupies residues 1–21 (MVAPLLVFLFSLQLCHTTSWA). The propeptide occupies 22 to 172 (YVGGNSLNSN…SNHQVIRDSR (151 aa)). The segment at 40–74 (FPAGTSNEVPEDAANGQDDNDDSQLTEPNDNNAPL) is disordered. Residues 64-74 (LTEPNDNNAPL) are compositionally biased toward polar residues. A phenylalanine amide mark is found at F179, F196, F208, F219, F230, F241, F253, F265, F277, F289, F301, F313, F325, F337, F346, F359, and F372. The interval 360 to 388 (GRTPTQSSDFMRFGKSLDKSENKTSDLQK) is disordered. Residues 374–388 (KSLDKSENKTSDLQK) are compositionally biased toward basic and acidic residues. Residues 375-388 (SLDKSENKTSDLQK) constitute a propeptide that is removed on maturation.

The protein belongs to the FARP (FMRFamide related peptide) family. As to expression, in the brain, expressed in 2 large cells in the lateral neurons in each optic lobe, 2 slightly bigger cells on both sides of the tritocerebrum, around 14 small cells in the dorsal area, around 13 cells in the subesophageal ganglion, and in the central brain.

It localises to the secreted. The chain is FMRFamide neuropeptides from Musca domestica (House fly).